We begin with the raw amino-acid sequence, 197 residues long: Ribonuclease HII (197 aa).

In terms of domain architecture, RNase H type-2 spans 9–197 (KLIAGVDEVG…APVKKALEQF (189 aa)). The a divalent metal cation site is built by aspartate 15, glutamate 16, and aspartate 107.

Belongs to the RNase HII family. The cofactor is Mn(2+). Requires Mg(2+) as cofactor.

The protein resides in the cytoplasm. It carries out the reaction Endonucleolytic cleavage to 5'-phosphomonoester.. Its function is as follows. Endonuclease that specifically degrades the RNA of RNA-DNA hybrids. This Haemophilus influenzae (strain ATCC 51907 / DSM 11121 / KW20 / Rd) protein is Ribonuclease HII (rnhB).